The chain runs to 549 residues: Teichoic acids export ATP-binding protein TagH (549 aa).

The ABC transporter domain maps to 22–243 (DKLKDLFRKQ…YRAFLKEYNQ (222 aa)). 57-64 (GLNGSGKS) provides a ligand contact to ATP. The segment at 244 to 549 (MSMEDRKKFQ…EIQSISIVKK (306 aa)) is unknown. The SH3b domain maps to 346 to 415 (ENMYMVKSNG…VSTKFIEPFK (70 aa)).

Belongs to the ABC transporter superfamily. Teichoic acids exporter (TC 3.A.1.104.1) family. In terms of assembly, the complex is composed of two ATP-binding proteins (TagH) and two transmembrane proteins (TagG).

It localises to the cell membrane. It carries out the reaction ATP + H2O + teichoic acidSide 1 = ADP + phosphate + teichoic acidSide 2.. Its function is as follows. Part of the ABC transporter complex TagGH involved in teichoic acids export. Responsible for energy coupling to the transport system. In Bacillus cereus (strain ZK / E33L), this protein is Teichoic acids export ATP-binding protein TagH.